Reading from the N-terminus, the 144-residue chain is UPF0102 protein BPSL3274 (144 aa).

A disordered region spans residues 1–28 (MCHAREASPGTGEPEAAPRDNFPREAGS). Residues 16–28 (AAPRDNFPREAGS) show a composition bias toward basic and acidic residues.

It belongs to the UPF0102 family.

The chain is UPF0102 protein BPSL3274 from Burkholderia pseudomallei (strain K96243).